The sequence spans 529 residues: Peptide chain release factor 3 (529 aa).

Residues 11–280 (AKRRTFAIIS…GLVEWAPAPM (270 aa)) form the tr-type G domain. GTP is bound by residues 20–27 (SHPDAGKT), 88–92 (DTPGH), and 142–145 (NKLD).

Belongs to the TRAFAC class translation factor GTPase superfamily. Classic translation factor GTPase family. PrfC subfamily.

It localises to the cytoplasm. Its function is as follows. Increases the formation of ribosomal termination complexes and stimulates activities of RF-1 and RF-2. It binds guanine nucleotides and has strong preference for UGA stop codons. It may interact directly with the ribosome. The stimulation of RF-1 and RF-2 is significantly reduced by GTP and GDP, but not by GMP. This Escherichia coli O8 (strain IAI1) protein is Peptide chain release factor 3.